Reading from the N-terminus, the 346-residue chain is tRNA N6-adenosine threonylcarbamoyltransferase (346 aa).

Fe cation is bound by residues histidine 111 and histidine 115. Residues 134-138, aspartate 167, glycine 180, and asparagine 279 each bind substrate; that span reads LVSGG. Aspartate 307 is a Fe cation binding site.

It belongs to the KAE1 / TsaD family. Fe(2+) is required as a cofactor.

It localises to the cytoplasm. It catalyses the reaction L-threonylcarbamoyladenylate + adenosine(37) in tRNA = N(6)-L-threonylcarbamoyladenosine(37) in tRNA + AMP + H(+). Functionally, required for the formation of a threonylcarbamoyl group on adenosine at position 37 (t(6)A37) in tRNAs that read codons beginning with adenine. Is involved in the transfer of the threonylcarbamoyl moiety of threonylcarbamoyl-AMP (TC-AMP) to the N6 group of A37, together with TsaE and TsaB. TsaD likely plays a direct catalytic role in this reaction. The polypeptide is tRNA N6-adenosine threonylcarbamoyltransferase (Burkholderia thailandensis (strain ATCC 700388 / DSM 13276 / CCUG 48851 / CIP 106301 / E264)).